The following is a 61-amino-acid chain: Small ribosomal subunit protein uS14 (61 aa).

Residues Cys24, Cys27, Cys40, and Cys43 each coordinate Zn(2+).

This sequence belongs to the universal ribosomal protein uS14 family. Zinc-binding uS14 subfamily. In terms of assembly, part of the 30S ribosomal subunit. Contacts proteins S3 and S10. It depends on Zn(2+) as a cofactor.

Its function is as follows. Binds 16S rRNA, required for the assembly of 30S particles and may also be responsible for determining the conformation of the 16S rRNA at the A site. This chain is Small ribosomal subunit protein uS14, found in Mycoplasmopsis pulmonis (strain UAB CTIP) (Mycoplasma pulmonis).